A 216-amino-acid polypeptide reads, in one-letter code: Co-chaperone protein SBA1 (216 aa).

Ser2 is modified (N-acetylserine). In terms of domain architecture, CS spans 5–108; that stretch reads VINPQVAWAQ…LESEYWPRLT (104 aa). 2 repeats span residues 141 to 156 and 160 to 174; these read AQGMDFSQMMGGAGGA and GGMDFSQMMGGAGGA. The tract at residues 169 to 216 is disordered; the sequence is GGAGGAGSPDMAQLQQLLAQSGGNLDMGDFKENDEEDEEEEIEPEVKA. A compositionally biased stretch (acidic residues) spans 200–216; the sequence is ENDEEDEEEEIEPEVKA.

This sequence belongs to the p23/wos2 family. Interacts with HSP82.

In terms of biological role, acts as a co-chaperone. The polypeptide is Co-chaperone protein SBA1 (SBA1) (Saccharomyces cerevisiae (strain ATCC 204508 / S288c) (Baker's yeast)).